A 590-amino-acid chain; its full sequence is Probable metalloendopeptidase G1-type (590 aa).

H41 contributes to the Zn(2+) binding site. The active site involves E44. H45 provides a ligand contact to Zn(2+).

Belongs to the peptidase M44 family. Zn(2+) serves as cofactor.

Functionally, seems to be involved in viral proteins maturation by cleavage at Ala-Gly-|-Xaa motifs. The polypeptide is Probable metalloendopeptidase G1-type (Homo sapiens (Human)).